The following is a 341-amino-acid chain: Ferrochelatase (341 aa).

His-189 and Glu-293 together coordinate Fe cation.

It belongs to the ferrochelatase family.

It is found in the cytoplasm. It catalyses the reaction heme b + 2 H(+) = protoporphyrin IX + Fe(2+). It participates in porphyrin-containing compound metabolism; protoheme biosynthesis; protoheme from protoporphyrin-IX: step 1/1. Its function is as follows. Catalyzes the ferrous insertion into protoporphyrin IX. The polypeptide is Ferrochelatase (Pseudomonas fluorescens (strain Pf0-1)).